The following is a 290-amino-acid chain: RWD domain-containing protein 2B (290 aa).

The RWD domain maps to 12–136 (SELDLLASMF…EWVKEHAFDY (125 aa)).

This chain is RWD domain-containing protein 2B (Rwdd2b), found in Mus musculus (Mouse).